We begin with the raw amino-acid sequence, 315 residues long: Ribosomal RNA small subunit methyltransferase H (315 aa).

S-adenosyl-L-methionine is bound by residues G36–H38, D56, F80, D102, and Q109.

This sequence belongs to the methyltransferase superfamily. RsmH family.

It is found in the cytoplasm. The catalysed reaction is cytidine(1402) in 16S rRNA + S-adenosyl-L-methionine = N(4)-methylcytidine(1402) in 16S rRNA + S-adenosyl-L-homocysteine + H(+). Specifically methylates the N4 position of cytidine in position 1402 (C1402) of 16S rRNA. In Proteus mirabilis (strain HI4320), this protein is Ribosomal RNA small subunit methyltransferase H.